The sequence spans 733 residues: MDENDLKYIEKVLGRKPNHIELAMFENLWSEHCAYRTSKKLLRMFAKTVNEKTSKNIVVGIGDDAAVIRLKNDICLAIAMESHNHPSYIDPYNGAATGVGGIVRDVLSMGAKPIALLDPLRFGDIFGKEGDKVRWLIEGVVKGIGDYGNRIGVPTVGGECEFDSSFDYNNLVNVVCVGLVKENEIITGKAKEPGLSLILIGSTGRDGIGGASFASKDLTEESEEERPSVQVGDAFSEKCLIDAVLEAVKTGKVKAMKDLGAAGLSGASSEMCYGGGVGCELYLENVVLREPLTPYEIMVSESQERMLLAVEPGSEEEIIEIFKKYELPASVIGKTIPEKRIIAKYKGEVVVDLPLDLLCEAPLYDREGKEDLKEKEDDKEKIKMPEDLNAVLLKLLESPNICSKEWIYQQYDHEVQIRTVVKPGKDAAVLRINEVYPMGIALTTDCNSRYCKLNPYVGAVNAVAEAVRNLATVGAEPIAMLDNLNFGNPERPERFWQLAECIKGLADAAEFFEIPVVGGNVSLYNETVIEGKEHPINPTPAIFVLGKVEDVEKVPGVLDNKIKEGDILIITNETKDEMGGSEYYKVIHNTEEGRVPRVDLEKEKKIYEEVREVVKEGLVSEAVDCSRGGLAVALAKMAVLNNIGLEVDLTEYNKNNLRDDILLFSETSGRIILAVRDENKDKVLSKLSSAYIIGKVGGSRLKIKINEKDVVNLDVEEMKKRYYEAFPKMMGEL.

Residue His-32 is part of the active site. Residue Tyr-35 coordinates ATP. Glu-81 provides a ligand contact to Mg(2+). Residues 82 to 85 (SHNH) and Arg-104 each bind substrate. Catalysis depends on His-83, which acts as the Proton acceptor. Residue Asp-105 coordinates Mg(2+). A substrate-binding site is contributed by Gln-230. Asp-258 lines the Mg(2+) pocket. Substrate is bound at residue 301-303 (ESQ). 2 residues coordinate ATP: Asp-482 and Gly-519. Asn-520 serves as a coordination point for Mg(2+). Ser-522 contacts substrate.

This sequence belongs to the FGAMS family. In terms of assembly, monomer. Part of the FGAM synthase complex composed of 1 PurL, 1 PurQ and 2 PurS subunits.

It localises to the cytoplasm. The catalysed reaction is N(2)-formyl-N(1)-(5-phospho-beta-D-ribosyl)glycinamide + L-glutamine + ATP + H2O = 2-formamido-N(1)-(5-O-phospho-beta-D-ribosyl)acetamidine + L-glutamate + ADP + phosphate + H(+). It participates in purine metabolism; IMP biosynthesis via de novo pathway; 5-amino-1-(5-phospho-D-ribosyl)imidazole from N(2)-formyl-N(1)-(5-phospho-D-ribosyl)glycinamide: step 1/2. Its function is as follows. Part of the phosphoribosylformylglycinamidine synthase complex involved in the purines biosynthetic pathway. Catalyzes the ATP-dependent conversion of formylglycinamide ribonucleotide (FGAR) and glutamine to yield formylglycinamidine ribonucleotide (FGAM) and glutamate. The FGAM synthase complex is composed of three subunits. PurQ produces an ammonia molecule by converting glutamine to glutamate. PurL transfers the ammonia molecule to FGAR to form FGAM in an ATP-dependent manner. PurS interacts with PurQ and PurL and is thought to assist in the transfer of the ammonia molecule from PurQ to PurL. This chain is Phosphoribosylformylglycinamidine synthase subunit PurL, found in Methanocaldococcus jannaschii (strain ATCC 43067 / DSM 2661 / JAL-1 / JCM 10045 / NBRC 100440) (Methanococcus jannaschii).